The sequence spans 305 residues: tRNA dimethylallyltransferase (305 aa).

9–16 (GPTAVGKT) provides a ligand contact to ATP. 11 to 16 (TAVGKT) is a binding site for substrate. The interval 34–37 (DSRQ) is interaction with substrate tRNA.

Belongs to the IPP transferase family. In terms of assembly, monomer. Mg(2+) is required as a cofactor.

The enzyme catalyses adenosine(37) in tRNA + dimethylallyl diphosphate = N(6)-dimethylallyladenosine(37) in tRNA + diphosphate. Its function is as follows. Catalyzes the transfer of a dimethylallyl group onto the adenine at position 37 in tRNAs that read codons beginning with uridine, leading to the formation of N6-(dimethylallyl)adenosine (i(6)A). This chain is tRNA dimethylallyltransferase, found in Roseiflexus sp. (strain RS-1).